Reading from the N-terminus, the 237-residue chain is Protein PetR (237 aa).

Residues 8–121 (HLLIVDDDER…ELLLRINAIL (114 aa)) enclose the Response regulatory domain. 4-aspartylphosphate is present on aspartate 57. The H-T-H motif DNA-binding region spans 77–95 (ATPILLLTARGETRERIEG). Positions 132–236 (PKYLSLGPLR…VRGLGYMLAP (105 aa)) form a DNA-binding region, ompR/PhoB-type.

In terms of biological role, necessary for photosynthetic and respiratory growth. Probable promoter-specific protein mediating the interaction between DNA and RNA polymerase. This Rhodobacter capsulatus (strain ATCC BAA-309 / NBRC 16581 / SB1003) protein is Protein PetR (petR).